A 203-amino-acid polypeptide reads, in one-letter code: Holliday junction branch migration complex subunit RuvA (203 aa).

The segment at 1-64 (MIGRLRGIIL…EDAQLLYGFN (64 aa)) is domain I. The domain II stretch occupies residues 65–142 (NKQERTLFKE…KGLHGDLFTP (78 aa)). Residues 143 to 154 (AVDLVLTSPASP) form a flexible linker region. The segment at 155-203 (TSEDAEQEAVAALVALGYKPQEASRMVSKIARPDASSETLIRDALRAAL) is domain III.

This sequence belongs to the RuvA family. As to quaternary structure, homotetramer. Forms an RuvA(8)-RuvB(12)-Holliday junction (HJ) complex. HJ DNA is sandwiched between 2 RuvA tetramers; dsDNA enters through RuvA and exits via RuvB. An RuvB hexamer assembles on each DNA strand where it exits the tetramer. Each RuvB hexamer is contacted by two RuvA subunits (via domain III) on 2 adjacent RuvB subunits; this complex drives branch migration. In the full resolvosome a probable DNA-RuvA(4)-RuvB(12)-RuvC(2) complex forms which resolves the HJ.

Its subcellular location is the cytoplasm. Its function is as follows. The RuvA-RuvB-RuvC complex processes Holliday junction (HJ) DNA during genetic recombination and DNA repair, while the RuvA-RuvB complex plays an important role in the rescue of blocked DNA replication forks via replication fork reversal (RFR). RuvA specifically binds to HJ cruciform DNA, conferring on it an open structure. The RuvB hexamer acts as an ATP-dependent pump, pulling dsDNA into and through the RuvAB complex. HJ branch migration allows RuvC to scan DNA until it finds its consensus sequence, where it cleaves and resolves the cruciform DNA. In Salmonella agona (strain SL483), this protein is Holliday junction branch migration complex subunit RuvA.